A 375-amino-acid polypeptide reads, in one-letter code: Glutamate 5-kinase (375 aa).

Lys17 contacts ATP. Ser57, Asp144, and Asn158 together coordinate substrate. 178–179 is an ATP binding site; it reads TD. Residues 284 to 360 enclose the PUA domain; sequence SGSIVVDTGA…NEIADILGYK (77 aa).

Belongs to the glutamate 5-kinase family.

Its subcellular location is the cytoplasm. It carries out the reaction L-glutamate + ATP = L-glutamyl 5-phosphate + ADP. The protein operates within amino-acid biosynthesis; L-proline biosynthesis; L-glutamate 5-semialdehyde from L-glutamate: step 1/2. Its function is as follows. Catalyzes the transfer of a phosphate group to glutamate to form L-glutamate 5-phosphate. This is Glutamate 5-kinase from Methanococcoides burtonii (strain DSM 6242 / NBRC 107633 / OCM 468 / ACE-M).